Here is a 1378-residue protein sequence, read N- to C-terminus: Carboxypeptidase D (1378 aa).

A signal peptide spans 1 to 37; the sequence is MASGWDERPPWRLESLRLLPPPPLLLLLLLLRSSAQA. Topologically, residues 38-1297 are extracellular; sequence AHIKKAEATT…DNRIFGLPRE (1260 aa). The region spanning 62-380 is the Peptidase M14 1 domain; it reads HYYHEAALGE…ESLITLIEKV (319 aa). Zn(2+) contacts are provided by H139 and E142. The short motif at 162 to 164 is the Cell attachment site element; it reads RGD. 2 N-linked (GlcNAc...) asparagine glycosylation sites follow: N172 and N217. The disordered stretch occupies residues 189 to 232; that stretch reads RAREGDCGLGDSGPPGTSGRDNSRGRDLNRSFPDQFSTGEPPSL. H257 lines the Zn(2+) pocket. Residue Y265 is modified to Phosphotyrosine. At S270 the chain carries Phosphoserine. E350 serves as the catalytic Proton donor/acceptor. Residues N399, N410, N429, and N522 are each glycosylated (N-linked (GlcNAc...) asparagine). Residues 502–792 form the Peptidase M14 2 domain; the sequence is HHHHFPDMEI…RSLIQFMKQV (291 aa). Zn(2+) contacts are provided by H564 and E567. N-linked (GlcNAc...) asparagine glycosylation is present at N626. H671 is a Zn(2+) binding site. The Proton donor/acceptor role is filled by E762. 6 N-linked (GlcNAc...) asparagine glycosylation sites follow: N811, N855, N867, N879, N953, and N976. Residues 875–898 are disordered; that stretch reads TDANNESKKGKGHSTSTDDTSDPT. In terms of domain architecture, Peptidase M14 3 spans 930 to 1209; that stretch reads RYHSYKDLSE…KSLLSMLVEV (280 aa). Positions 1039-1048 are enriched in basic and acidic residues; the sequence is RERAQEKDCT. Residues 1039–1068 are disordered; the sequence is RERAQEKDCTSKTGHTNARGRDLDTDFTSN. Residues N1068 and N1140 are each glycosylated (N-linked (GlcNAc...) asparagine). The chain crosses the membrane as a helical span at residues 1298–1318; it reads LVVTVSGATMSALILTACIIW. 3 S-palmitoyl cysteine lipidation sites follow: C1315, C1319, and C1321. The Cytoplasmic segment spans residues 1319 to 1378; it reads CICSIKSNRHKDGFHRLRQHHDEYEDEIRMMSTGSKKSLLSHEFQDETDTEEETLYSSKH. S1356 and S1359 each carry phosphoserine. The segment at 1357-1378 is disordered; sequence LLSHEFQDETDTEEETLYSSKH. Phosphothreonine is present on residues T1366 and T1368.

It belongs to the peptidase M14 family. The cofactor is Zn(2+). Isoform 1 is widely expressed with highest levels in the hippocampus, spinal cord, atrium, colon, testis and ovaries. Detected in the liver of females but not males. Isoform 2 is not detected in brain or lung.

Its subcellular location is the cell membrane. It localises to the nucleus. The enzyme catalyses Releases C-terminal Arg and Lys from polypeptides.. The chain is Carboxypeptidase D from Rattus norvegicus (Rat).